Consider the following 750-residue polypeptide: Neprilysin (750 aa).

A compositionally biased stretch (polar residues) spans 1–14 (MGRSESQMDITDIN). The disordered stretch occupies residues 1 to 20 (MGRSESQMDITDINTPKPKK). A lipid anchor (N-myristoyl glycine) is attached at Gly-2. Topologically, residues 2–28 (GRSESQMDITDINTPKPKKKQRWTPLE) are cytoplasmic. Phosphoserine occurs at positions 4 and 6. Positions 16-23 (PKPKKKQR) match the Stop-transfer sequence motif. A helical; Signal-anchor for type II membrane protein membrane pass occupies residues 29-51 (ISLSVLVLLLTVIAVTMIALYAT). Residues 52-750 (YDDGICKSSD…MNPEKKCRVW (699 aa)) lie on the Extracellular side of the membrane. Positions 56–750 (ICKSSDCIKS…MNPEKKCRVW (695 aa)) constitute a Peptidase M13 domain. Intrachain disulfides connect Cys-57–Cys-62, Cys-80–Cys-735, Cys-88–Cys-695, Cys-143–Cys-411, Cys-234–Cys-242, and Cys-621–Cys-747. Arg-103 provides a ligand contact to a peptide. The N-linked (GlcNAc...) asparagine glycan is linked to Asn-145. 3 N-linked (GlcNAc...) asparagine glycosylation sites follow: Asn-285, Asn-311, and Asn-325. A Zn(2+)-binding site is contributed by His-584. Glu-585 is a catalytic residue. His-588 is a binding site for Zn(2+). N-linked (GlcNAc...) asparagine glycosylation occurs at Asn-628. Residue Glu-647 coordinates Zn(2+). Residue Asp-651 is the Proton donor of the active site.

It belongs to the peptidase M13 family. Requires Zn(2+) as cofactor. Post-translationally, myristoylation is a determinant of membrane targeting. Glycosylation at Asn-628 is necessary both for surface expression and neutral endopeptidase activity.

Its subcellular location is the cell membrane. The catalysed reaction is Preferential cleavage of polypeptides between hydrophobic residues, particularly with Phe or Tyr at P1'.. The enzyme catalyses substance P + H2O = substance P(1-9) + L-Leu-L-Met-NH2. It catalyses the reaction substance P + H2O = substance P(1-7) + L-Phe-Gly-L-Leu-L-Met-NH2. It carries out the reaction neurotensin + H2O = neurotensin(1-11) + L-isoleucyl-L-leucine. The catalysed reaction is neurotensin + H2O = neurotensin(1-10) + L-tyrosyl-L-isoleucyl-L-leucine. Inhibited by mixanpril, an orally-active drug used for the treatment of hypertension. Its function is as follows. Thermolysin-like specificity, but is almost confined on acting on polypeptides of up to 30 amino acids. Biologically important in the destruction of opioid peptides such as Met- and Leu-enkephalins by cleavage of a Gly-Phe bond. Catalyzes cleavage of bradykinin, substance P and neurotensin peptides. Able to cleave angiotensin-1, angiotensin-2 and angiotensin 1-9. Involved in the degradation of atrial natriuretic factor (ANF) and brain natriuretic factor (BNP(1-32)). Displays UV-inducible elastase activity toward skin preelastic and elastic fibers. This is Neprilysin (MME) from Oryctolagus cuniculus (Rabbit).